Here is a 180-residue protein sequence, read N- to C-terminus: Ribosome rescue factor SmrB (180 aa).

Residues 98-173 (LDLHGLTQLQ…GNAALLVLVA (76 aa)) enclose the Smr domain.

It belongs to the SmrB family. As to quaternary structure, associates with collided ribosomes, but not with correctly translating polysomes.

Its function is as follows. Acts as a ribosome collision sensor. Detects stalled/collided disomes (pairs of ribosomes where the leading ribosome is stalled and a second ribosome has collided with it) and endonucleolytically cleaves mRNA at the 5' boundary of the stalled ribosome. Stalled/collided disomes form a new interface (primarily via the 30S subunits) that binds SmrB. Cleaved mRNA becomes available for tmRNA ligation, leading to ribosomal subunit dissociation and rescue of stalled ribosomes. This chain is Ribosome rescue factor SmrB, found in Pectobacterium atrosepticum (strain SCRI 1043 / ATCC BAA-672) (Erwinia carotovora subsp. atroseptica).